The sequence spans 208 residues: LexA repressor (208 aa).

Positions 29–49 (IREIGDSLNINSTSTVHNNIL) form a DNA-binding region, H-T-H motif. Active-site for autocatalytic cleavage activity residues include Ser131 and Lys168.

Belongs to the peptidase S24 family. In terms of assembly, homodimer.

It carries out the reaction Hydrolysis of Ala-|-Gly bond in repressor LexA.. Functionally, represses a number of genes involved in the response to DNA damage (SOS response), including recA and lexA. In the presence of single-stranded DNA, RecA interacts with LexA causing an autocatalytic cleavage which disrupts the DNA-binding part of LexA, leading to derepression of the SOS regulon and eventually DNA repair. This Finegoldia magna (strain ATCC 29328 / DSM 20472 / WAL 2508) (Peptostreptococcus magnus) protein is LexA repressor.